The chain runs to 625 residues: Sphingomyelin phosphodiesterase (625 aa).

The tract at residues 1–20 (MPRHGVSPGQGLPRSGREQA) is disordered. The N-terminal stretch at 1–40 (MPRHGVSPGQGLPRSGREQASDRSLGAPCLRLLWLGLALA) is a signal peptide. The Saposin B-type domain occupies 81–165 (WNLTCPTCKG…LLGSSCGHWD (85 aa)). Asn82 carries an N-linked (GlcNAc...) asparagine glycan. 3 disulfide bridges follow: Cys85/Cys161, Cys88/Cys153, and Cys116/Cys127. A glycan (N-linked (GlcNAc...) asparagine) is linked at Asn171. 2 residues coordinate Zn(2+): Asp202 and His204. 2 disulfide bridges follow: Cys217–Cys222 and Cys223–Cys246. Zn(2+)-binding residues include Asp274 and Asn314. 2 N-linked (GlcNAc...) asparagine glycosylation sites follow: Asn331 and Asn391. Cys381 and Cys427 are disulfide-bonded. Zn(2+)-binding residues include His421, His453, and His455. An N-linked (GlcNAc...) asparagine glycan is attached at Asn499. Ser504 is modified (phosphoserine). Asn516 carries an N-linked (GlcNAc...) asparagine glycan. Intrachain disulfides connect Cys580/Cys584 and Cys590/Cys603.

This sequence belongs to the acid sphingomyelinase family. As to quaternary structure, monomer. Interacts with SORT1; the interaction is required for SMPD1 targeting to lysosomes. Requires Zn(2+) as cofactor. Post-translationally, proteolytically processed. Mature lysosomal form arises from C-terminal proteolytic processing of pro-sphingomyelin phosphodiesterase. In terms of processing, both lysosomal and secreted forms are glycosylated but they show a differential pattern of glycosylation. Phosphorylated at Ser-504 by PRKCD upon stress stimuli. Phosphorylation is required for secretion. Post-translationally, this form is generated following cleavage by CASP7 in the extracellular milieu. It shows increased activity.

Its subcellular location is the lysosome. The protein localises to the lipid droplet. It is found in the secreted. The protein resides in the extracellular space. It catalyses the reaction a sphingomyelin + H2O = phosphocholine + an N-acylsphing-4-enine + H(+). It carries out the reaction N-(octadecanoyl)-sphing-4-enine-1-phosphocholine + H2O = N-octadecanoylsphing-4-enine + phosphocholine + H(+). The catalysed reaction is a 1,2-diacyl-sn-glycero-3-phosphocholine + H2O = phosphocholine + a 1,2-diacyl-sn-glycerol + H(+). The enzyme catalyses 1,2-dihexadecanoyl-sn-glycero-3-phosphocholine + H2O = 1,2-dihexadecanoyl-sn-glycerol + phosphocholine + H(+). Hydrolysis of liposomal sphingomyelin is stimulated by incorporation of diacylglycerol (DAG), ceramide and free fatty acids into the liposomal membranes. Phosphatidylcholine hydrolysis is inhibited by incorporation of cholesterol, ceramide, DAG, monoacylglycerol and fatty acids. Functionally, converts sphingomyelin to ceramide. Exists as two enzymatic forms that arise from alternative trafficking of a single protein precursor, one that is targeted to the endolysosomal compartment, whereas the other is released extracellularly. However, in response to various forms of stress, lysosomal exocytosis may represent a major source of the secretory form. In terms of biological role, in the lysosomes, converts sphingomyelin to ceramide. Plays an important role in the export of cholesterol from the intraendolysosomal membranes. Also has phospholipase C activities toward 1,2-diacylglycerolphosphocholine and 1,2-diacylglycerolphosphoglycerol. Modulates stress-induced apoptosis through the production of ceramide. When secreted, modulates cell signaling with its ability to reorganize the plasma membrane by converting sphingomyelin to ceramide. Secreted form is increased in response to stress and inflammatory mediators such as IL1B, IFNG or TNF as well as upon infection with bacteria and viruses. Produces the release of ceramide in the outer leaflet of the plasma membrane playing a central role in host defense. Ceramide reorganizes these rafts into larger signaling platforms that are required to internalize bacteria, induce apoptosis and regulate the cytokine response in infected cells. In wounded cells, the lysosomal form is released extracellularly in the presence of Ca(2+) and promotes endocytosis and plasma membrane repair. Its function is as follows. This form is generated following cleavage by CASP7 in the extracellular milieu in response to bacterial infection. It shows increased ability to convert sphingomyelin to ceramide and promotes plasma membrane repair. Plasma membrane repair by ceramide counteracts the action of gasdermin-D (GSDMD) perforin (PRF1) pores that are formed in response to bacterial infection. The polypeptide is Sphingomyelin phosphodiesterase (SMPD1) (Bos taurus (Bovine)).